A 912-amino-acid polypeptide reads, in one-letter code: Ubiquitin carboxyl-terminal hydrolase 3 (912 aa).

Residues 1–11 (MNMQDANKEES) show a composition bias toward basic and acidic residues. Disordered stretches follow at residues 1-30 (MNMQ…TNMQ), 68-176 (IYHQ…SYSS), 241-384 (NSSV…TTAG), and 396-417 (GKSS…YVPP). 3 stretches are compositionally biased toward low complexity: residues 82 to 95 (NNIN…NNNI), 102 to 140 (SNGI…SNNH), and 159 to 176 (TNSS…SYSS). Positions 249–259 (AHHHTKSHSIP) are enriched in basic residues. The span at 260-310 (KHNEEVKTETHGEEEDAHDKKPHASKDAHELKKKTEVKKEDAKQDRNEKVI) shows a compositional bias: basic and acidic residues. Over residues 335-355 (SKTSSPSPSPPAAKSWSAIAS) the composition is skewed to low complexity. Polar residues-rich tracts occupy residues 361-384 (RQAS…TTAG) and 396-406 (GKSSSPLLSKQ). The region spanning 460–911 (RGIINRANIC…TAYILMYQKR (452 aa)) is the USP domain. The active-site Nucleophile is the Cys-469. Catalysis depends on His-861, which acts as the Proton acceptor.

The protein belongs to the peptidase C19 family. In terms of assembly, heterotetramer with BRE5; contains two molecules of BRE5 and two molecules of UBP3. Forms a complex composed of CDC48, DOA1, deubiquitinase UBP3 and probably BRE5. Within the complex interacts directly with DOA1 and CDC48 in a BRE5-independent manner.

The enzyme catalyses Thiol-dependent hydrolysis of ester, thioester, amide, peptide and isopeptide bonds formed by the C-terminal Gly of ubiquitin (a 76-residue protein attached to proteins as an intracellular targeting signal).. Functionally, has an ATP-independent isopeptidase activity, cleaving at the C-terminus of the ubiquitin moiety in natural or engineered linear fusion proteins, irrespective of their size or the presence of an N-terminal extension to ubiquitin. Plays a role in regulation of silencing by interacting with SIR4. Also, in conjunction with BRE5, cleaves ubiquitin, leading to the subsequent mono-ubiquitination of SEC23. Required for ribophagy, a process which relocalizes ribosomal particles into the vacuole for degradation in response to starvation. The sequence is that of Ubiquitin carboxyl-terminal hydrolase 3 (UBP3) from Saccharomyces cerevisiae (strain ATCC 204508 / S288c) (Baker's yeast).